Consider the following 125-residue polypeptide: Probable growth factor FPV211 (125 aa).

A signal peptide spans 1-48 (MKEPLIEVKREYNLIKTLTGKKFVVSTSIVVVLLIINMIFYGIRIHEL). In terms of domain architecture, EGF-like spans 80-120 (LFEKCKSKFNNFCIYGECMNIINLDKKFCICNKGYTGNRCD). 3 cysteine pairs are disulfide-bonded: Cys84–Cys97, Cys92–Cys108, and Cys110–Cys119.

It is found in the secreted. This chain is Probable growth factor FPV211, found in Vertebrata (FPV).